Consider the following 538-residue polypeptide: Chaperonin GroEL (538 aa).

ATP contacts are provided by residues 29 to 32 (TIGP), 86 to 90 (DGTTT), G413, 476 to 478 (NAA), and D492.

This sequence belongs to the chaperonin (HSP60) family. In terms of assembly, forms a cylinder of 14 subunits composed of two heptameric rings stacked back-to-back. Interacts with the co-chaperonin GroES.

It localises to the cytoplasm. The enzyme catalyses ATP + H2O + a folded polypeptide = ADP + phosphate + an unfolded polypeptide.. Functionally, together with its co-chaperonin GroES, plays an essential role in assisting protein folding. The GroEL-GroES system forms a nano-cage that allows encapsulation of the non-native substrate proteins and provides a physical environment optimized to promote and accelerate protein folding. In Staphylococcus aureus (strain MRSA252), this protein is Chaperonin GroEL.